Consider the following 65-residue polypeptide: Large ribosomal subunit protein bL35 (65 aa).

The protein belongs to the bacterial ribosomal protein bL35 family.

The sequence is that of Large ribosomal subunit protein bL35 from Neisseria meningitidis serogroup A / serotype 4A (strain DSM 15465 / Z2491).